Reading from the N-terminus, the 217-residue chain is Small ribosomal subunit protein uS3 (217 aa).

Residues I38 to K106 form the KH type-2 domain.

Belongs to the universal ribosomal protein uS3 family. As to quaternary structure, part of the 30S ribosomal subunit. Forms a tight complex with proteins S10 and S14.

Binds the lower part of the 30S subunit head. Binds mRNA in the 70S ribosome, positioning it for translation. The protein is Small ribosomal subunit protein uS3 of Staphylococcus saprophyticus subsp. saprophyticus (strain ATCC 15305 / DSM 20229 / NCIMB 8711 / NCTC 7292 / S-41).